A 208-amino-acid chain; its full sequence is FMN-dependent NADH:quinone oxidoreductase (208 aa).

Residues S9 and 15-17 (SHS) contribute to the FMN site.

The protein belongs to the azoreductase type 1 family. In terms of assembly, homodimer. Requires FMN as cofactor.

The catalysed reaction is 2 a quinone + NADH + H(+) = 2 a 1,4-benzosemiquinone + NAD(+). It carries out the reaction N,N-dimethyl-1,4-phenylenediamine + anthranilate + 2 NAD(+) = 2-(4-dimethylaminophenyl)diazenylbenzoate + 2 NADH + 2 H(+). Functionally, quinone reductase that provides resistance to thiol-specific stress caused by electrophilic quinones. Also exhibits azoreductase activity. Catalyzes the reductive cleavage of the azo bond in aromatic azo compounds to the corresponding amines. In Bordetella petrii (strain ATCC BAA-461 / DSM 12804 / CCUG 43448), this protein is FMN-dependent NADH:quinone oxidoreductase.